The chain runs to 473 residues: BTB/POZ domain-containing protein KCTD8 (473 aa).

Residues 1-36 are disordered; sequence MALKDTGSGGSTILPISEMVSSSSSPGASAAAAPGP. Residues 21–35 show a composition bias toward low complexity; it reads SSSSSPGASAAAAPG. Positions 44–122 constitute a BTB domain; sequence EVVELNVGGQ…LRDKQLALPE (79 aa). The residue at position 78 (serine 78) is a Phosphoserine. Arginine 80 carries the post-translational modification Omega-N-methylarginine. The segment at 326–409 is disordered; the sequence is IVSPKQEHED…WIPPPDKRRN (84 aa). The segment covering 330–346 has biased composition (basic and acidic residues); the sequence is KQEHEDRKHDKVTDKGS. Over residues 347–388 the composition is skewed to polar residues; sequence ESGTSCNELSTSSCDSHSEASTPQDNPSSAQQATAHQPNTLT. A Phosphoserine modification is found at serine 410.

In terms of assembly, interacts as a tetramer with GABRB1 and GABRB2.

It is found in the presynaptic cell membrane. It localises to the postsynaptic cell membrane. Auxiliary subunit of GABA-B receptors that determine the pharmacology and kinetics of the receptor response. Increases agonist potency and markedly alter the G-protein signaling of the receptors by accelerating onset and promoting desensitization. The chain is BTB/POZ domain-containing protein KCTD8 (KCTD8) from Homo sapiens (Human).